The primary structure comprises 429 residues: SVP1-like protein 2 (429 aa).

4 WD repeats span residues 10 to 48 (PVLA…LRTS), 50 to 96 (DFGA…QVGV), 178 to 218 (AHTS…RLYE), and 223 to 262 (IDKA…GTRP). Residues 262-297 (PITSNGGTAYAAGEPSVTGNNRPSSPYSVASSSGGG) are disordered.

This sequence belongs to the WD repeat PROPPIN family.

It is found in the vacuole membrane. The protein localises to the cytoplasmic vesicle membrane. In terms of biological role, involved in mitochondrial or peroxisomal functions and amino acid signaling pathways. The sequence is that of SVP1-like protein 2 (apg-14) from Neurospora crassa (strain ATCC 24698 / 74-OR23-1A / CBS 708.71 / DSM 1257 / FGSC 987).